Here is a 229-residue protein sequence, read N- to C-terminus: UPF0228 protein MA_3119 (229 aa).

The segment covering 35–66 (STPVNTSTPVNTSTPVNTSTPVNTSTPVSTST) has biased composition (low complexity). The interval 35-67 (STPVNTSTPVNTSTPVNTSTPVNTSTPVSTSTI) is disordered.

The protein belongs to the UPF0228 family.

This is UPF0228 protein MA_3119 from Methanosarcina acetivorans (strain ATCC 35395 / DSM 2834 / JCM 12185 / C2A).